Here is a 250-residue protein sequence, read N- to C-terminus: Methylthioribulose-1-phosphate dehydratase (250 aa).

His-103 and His-105 together coordinate Zn(2+).

This sequence belongs to the aldolase class II family. MtnB subfamily. Zn(2+) is required as a cofactor.

It carries out the reaction 5-(methylsulfanyl)-D-ribulose 1-phosphate = 5-methylsulfanyl-2,3-dioxopentyl phosphate + H2O. It functions in the pathway amino-acid biosynthesis; L-methionine biosynthesis via salvage pathway; L-methionine from S-methyl-5-thio-alpha-D-ribose 1-phosphate: step 2/6. Functionally, catalyzes the dehydration of methylthioribulose-1-phosphate (MTRu-1-P) into 2,3-diketo-5-methylthiopentyl-1-phosphate (DK-MTP-1-P). The polypeptide is Methylthioribulose-1-phosphate dehydratase (Leptospira borgpetersenii serovar Hardjo-bovis (strain JB197)).